We begin with the raw amino-acid sequence, 387 residues long: MKWLWVLGLVALSECLVKIPLMKIKSMRENLRESQVLKDYLEKYPRSRAHVLLEQRRNPAVTYEPMRNYLDLVYIGIISIGTPPQEFRVVLDTGSSVLWVPSIYCSSPACAHHKAFNPLRSSTFLVSGRPVNVAYGSGEMSGFLAYDTVRIGDLTVVAQAFGLSLEEPGIFMEYAVFDGILGLGYPNLGLQGITPVFDNLWLQGLIPQNLFAFYLSSKDEKGSMLMLGGVDPSYYHGELHWVPVSKPSYWQLAVDSISMNGEVIACDGGCQGIMDTGTSLLTGPRSSIVNIQNLIGAKASGDGEYFLKCDTINTLPDIVFTIGSVTYPVPASAYIRKDRSHNCRSNFEEGMDDPSDPEMWVLGDVFLRLYFTVFDRANNRIGLAPAA.

Positions 1-15 (MKWLWVLGLVALSEC) are cleaved as a signal peptide. Residues 16 to 62 (LVKIPLMKIKSMRENLRESQVLKDYLEKYPRSRAHVLLEQRRNPAVT) constitute a propeptide, activation peptide. One can recognise a Peptidase A1 domain in the interval 74-384 (YIGIISIGTP…DRANNRIGLA (311 aa)). The active site involves D92. Disulfide bonds link C105–C110 and C266–C270. The active site involves D275. An intrachain disulfide couples C309 to C343.

This sequence belongs to the peptidase A1 family. As to expression, expressed in glandular chief cells of the neonatal stomach. Expressed in yolk sacs of the placenta (at protein level).

It localises to the secreted. The enzyme catalyses Preferential cleavage: hydrophobic, preferably aromatic, residues in P1 and P1' positions. Cleaves 1-Phe-|-Val-2, 4-Gln-|-His-5, 13-Glu-|-Ala-14, 14-Ala-|-Leu-15, 15-Leu-|-Tyr-16, 16-Tyr-|-Leu-17, 23-Gly-|-Phe-24, 24-Phe-|-Phe-25 and 25-Phe-|-Tyr-26 bonds in the B chain of insulin.. Inhibited by pepstatin A. Functionally, shows particularly broad specificity; although bonds involving phenylalanine and leucine are preferred, many others are also cleaved to some extent. May play a role as a specialized neonatal digestive enzyme. The protein is Pepsin A-5 of Mus musculus (Mouse).